The chain runs to 585 residues: Glycerol-3-phosphate dehydrogenase (585 aa).

37–65 (DVVVIGGGVVGSGCALDAATRGLKVALVE) contributes to the FAD binding site.

This sequence belongs to the FAD-dependent glycerol-3-phosphate dehydrogenase family. FAD is required as a cofactor.

The protein resides in the cytoplasm. The enzyme catalyses a quinone + sn-glycerol 3-phosphate = dihydroxyacetone phosphate + a quinol. The polypeptide is Glycerol-3-phosphate dehydrogenase (glpD) (Mycobacterium leprae (strain TN)).